Here is a 192-residue protein sequence, read N- to C-terminus: MKQVEIIGYSRANLGKKGSKDLRLDSNVPCVLYGGESQLHFHVPMFLFRDIIYTGVACTVLLNLEGKQYKCVVQEVQFHPINEMLLHVDFLLLDDKKQVKMNIPVKFEGTSPGVIKGGKLVQKVATLQVKAFPKDLPDVILADISQLELAKSVKVGDIKTNNYTILNAKSIPVCTVTIPRSLKQEEAAAAKK.

Belongs to the bacterial ribosomal protein bL25 family. CTC subfamily. In terms of assembly, part of the 50S ribosomal subunit; part of the 5S rRNA/L5/L18/L25 subcomplex. Contacts the 5S rRNA. Binds to the 5S rRNA independently of L5 and L18.

In terms of biological role, this is one of the proteins that binds to the 5S RNA in the ribosome where it forms part of the central protuberance. The chain is Large ribosomal subunit protein bL25 from Cytophaga hutchinsonii (strain ATCC 33406 / DSM 1761 / CIP 103989 / NBRC 15051 / NCIMB 9469 / D465).